A 331-amino-acid polypeptide reads, in one-letter code: Neuropeptides B/W receptor type 1 (331 aa).

Residues M1–V43 lie on the Extracellular side of the membrane. N3, N13, and N27 each carry an N-linked (GlcNAc...) asparagine glycan. The chain crosses the membrane as a helical span at residues P44 to L66. The Cytoplasmic segment spans residues R67–T75. The helical transmembrane segment at N76–F100 threads the bilayer. At L101–V115 the chain is on the extracellular side. C112 and C191 are joined by a disulfide. Residues V116 to A135 traverse the membrane as a helical segment. The Cytoplasmic segment spans residues D136–A160. The helical transmembrane segment at V161 to A180 threads the bilayer. Over R181–A205 the chain is Extracellular. A helical membrane pass occupies residues S206–T227. The Cytoplasmic segment spans residues S228–R251. Residues V252–V276 traverse the membrane as a helical segment. Residues A277–P286 are Extracellular-facing. A helical transmembrane segment spans residues L287 to A301. The Cytoplasmic portion of the chain corresponds to N302 to S331.

The protein belongs to the G-protein coupled receptor 1 family.

It localises to the cell membrane. Functionally, interacts specifically with a number of opioid ligands. Receptor for neuropeptides B and W, which may be involved in neuroendocrine system regulation, food intake and the organization of other signals. The protein is Neuropeptides B/W receptor type 1 (NPBWR1) of Bos taurus (Bovine).